Consider the following 508-residue polypeptide: Vacuolar serine-type carboxypeptidase ATG42 (508 aa).

The signal sequence occupies residues 1–24 (MKYLNLVFVLQLLISIKYASFGRA). Cystine bridges form between C132–C375, C267–C281, C291–C314, C298–C307, and C336–C345. The N-linked (GlcNAc...) asparagine glycan is linked to N163. S219 is a catalytic residue. N-linked (GlcNAc...) asparagine glycosylation is present at N242. N-linked (GlcNAc...) asparagine glycosylation is found at N339 and N371. Residue D415 is part of the active site. C418 serves as a coordination point for substrate. H474 is an active-site residue. M475 lines the substrate pocket.

This sequence belongs to the peptidase S10 family.

The protein resides in the vacuole lumen. It carries out the reaction Release of a C-terminal amino acid with broad specificity.. Its function is as follows. Vacuolar serine-type carboxypeptidase involved in vacuolar zymogen activation, breakdown of the autophagic body, and autophagosome-dependent protein synthesis. Plays a key role in phytochelatin (PC) synthesis from glutathione (GSH) by cleaving the Gly from GSH and form the PC-peptides of the structure (gamma-Glu-Cys)2-Gly. Also involved in resistance to xenobiotics via the degradation of glutathione-S-conjugates. This is Vacuolar serine-type carboxypeptidase ATG42 from Saccharomyces cerevisiae (strain ATCC 204508 / S288c) (Baker's yeast).